A 102-amino-acid polypeptide reads, in one-letter code: RNA-binding protein Hfq (102 aa).

The Sm domain maps to 9–68; the sequence is DPFLNALRRERVPVSIYLVNGIKLQGQIESFDQFVILLKNTVSQMVYKHAISTVVPSRPV. The interval 63–102 is disordered; sequence VPSRPVSHHSNNTGGGSNNYHHGSSPAPSSQPQQDSADAE. The segment covering 70 to 102 has biased composition (low complexity); it reads HHSNNTGGGSNNYHHGSSPAPSSQPQQDSADAE.

It belongs to the Hfq family. As to quaternary structure, homohexamer.

In terms of biological role, RNA chaperone that binds small regulatory RNA (sRNAs) and mRNAs to facilitate mRNA translational regulation in response to envelope stress, environmental stress and changes in metabolite concentrations. Also binds with high specificity to tRNAs. The protein is RNA-binding protein Hfq of Erwinia tasmaniensis (strain DSM 17950 / CFBP 7177 / CIP 109463 / NCPPB 4357 / Et1/99).